Here is a 429-residue protein sequence, read N- to C-terminus: Serine--tRNA ligase (429 aa).

228-230 contacts L-serine; the sequence is TSE. 259–261 serves as a coordination point for ATP; that stretch reads RAE. Glutamate 282 provides a ligand contact to L-serine. 346-349 is a binding site for ATP; sequence EISS. L-serine is bound at residue serine 384.

This sequence belongs to the class-II aminoacyl-tRNA synthetase family. Type-1 seryl-tRNA synthetase subfamily. Homodimer. The tRNA molecule binds across the dimer.

It localises to the cytoplasm. It carries out the reaction tRNA(Ser) + L-serine + ATP = L-seryl-tRNA(Ser) + AMP + diphosphate + H(+). The enzyme catalyses tRNA(Sec) + L-serine + ATP = L-seryl-tRNA(Sec) + AMP + diphosphate + H(+). Its pathway is aminoacyl-tRNA biosynthesis; selenocysteinyl-tRNA(Sec) biosynthesis; L-seryl-tRNA(Sec) from L-serine and tRNA(Sec): step 1/1. Functionally, catalyzes the attachment of serine to tRNA(Ser). Is also able to aminoacylate tRNA(Sec) with serine, to form the misacylated tRNA L-seryl-tRNA(Sec), which will be further converted into selenocysteinyl-tRNA(Sec). The protein is Serine--tRNA ligase of Anaplasma marginale (strain St. Maries).